A 684-amino-acid polypeptide reads, in one-letter code: Macrolide export ATP-binding/permease protein MacB (684 aa).

Residues 2–243 form the ABC transporter domain; the sequence is IQLYGLRKDY…RSRLANSRAE (242 aa). 38–45 contributes to the ATP binding site; sequence GSSGSGKT. 5 helical membrane-spanning segments follow: residues 248-268, 275-295, 563-583, 615-635, and 644-664; these read PASA…VLAL, TVLT…TMEL, LVIA…IMLV, VLCV…SVLV, and AMSI…GIVF.

Belongs to the ABC transporter superfamily. Macrolide exporter (TC 3.A.1.122) family. Homodimer.

It localises to the cell inner membrane. In terms of biological role, non-canonical ABC transporter that contains transmembrane domains (TMD), which form a pore in the inner membrane, and an ATP-binding domain (NBD), which is responsible for energy generation. Confers resistance against macrolides. The protein is Macrolide export ATP-binding/permease protein MacB of Rhodopirellula baltica (strain DSM 10527 / NCIMB 13988 / SH1).